The primary structure comprises 456 residues: TGACG-sequence-specific DNA-binding protein TGA-2.1 (456 aa).

Disordered regions lie at residues 1-41 (MASK…NTSR) and 115-170 (SASG…QKTL). Composition is skewed to polar residues over residues 9-41 (GNRSGTTGMPSFISQIPVSNPMGTEANNTNTSR) and 125-141 (GESNMADSGSRTDTSTD). A compositionally biased stretch (basic and acidic residues) spans 158-169 (DKSKEKVLDQKT). Residues 166 to 229 (DQKTLRRLAQ…NIADQSNGVG (64 aa)) form the bZIP domain. Positions 167–220 (QKTLRRLAQNREAARKSRLRKKAYVQQLENSRLKLSQLEQDLQRARQQGKYISN) form a coiled coil. Residues 168–188 (KTLRRLAQNREAARKSRLRKK) form a basic motif region. The leucine-zipper stretch occupies residues 194-208 (LENSRLKLSQLEQDL). Residues 233–450 (PLAFDAEYSR…RALSSLWLAR (218 aa)) enclose the DOG1 domain.

The protein belongs to the bZIP family. As to quaternary structure, can form heterodimer with TGA2.2.

The protein resides in the nucleus. Transcriptional activator that binds specifically to the DNA sequence 5'-TGACG-3'. Recognizes ocs elements like the as-1 motif of the cauliflower mosaic virus 35S promoter. Binding to the as-1-like cis elements mediate auxin- and salicylic acid-inducible transcription. This is TGACG-sequence-specific DNA-binding protein TGA-2.1 (TGA21) from Nicotiana tabacum (Common tobacco).